The sequence spans 287 residues: uncharacterized protein (287 aa).

Belongs to the AllH family.

This is an uncharacterized protein from Escherichia coli (strain K12).